We begin with the raw amino-acid sequence, 310 residues long: tRNA dimethylallyltransferase (310 aa).

14 to 21 (GPTASGKS) serves as a coordination point for ATP. Residue 16–21 (TASGKS) coordinates substrate. Interaction with substrate tRNA regions lie at residues 39 to 42 (DSMQ) and 163 to 167 (QRIVR).

Belongs to the IPP transferase family. Monomer. Requires Mg(2+) as cofactor.

The catalysed reaction is adenosine(37) in tRNA + dimethylallyl diphosphate = N(6)-dimethylallyladenosine(37) in tRNA + diphosphate. Catalyzes the transfer of a dimethylallyl group onto the adenine at position 37 in tRNAs that read codons beginning with uridine, leading to the formation of N6-(dimethylallyl)adenosine (i(6)A). This is tRNA dimethylallyltransferase from Brucella suis biovar 1 (strain 1330).